Reading from the N-terminus, the 154-residue chain is Cytochrome c-550 (154 aa).

The first 20 residues, 1–20, serve as a signal peptide directing secretion; sequence MKISIYATLAALSLALPAVA. Gln21 bears the Pyrrolidone carboxylic acid mark. Heme c contacts are provided by Cys35, Cys38, His39, and Met120. A propeptide spanning residues 150–154 is cleaved from the precursor; that stretch reads EGAAN.

Binds 1 heme c group covalently per subunit.

The protein is Cytochrome c-550 (cyc) of Paracoccus versutus (Thiobacillus versutus).